We begin with the raw amino-acid sequence, 235 residues long: Endonuclease V (235 aa).

Residues D45 and D115 each coordinate Mg(2+).

Belongs to the endonuclease V family. Mg(2+) serves as cofactor.

Its subcellular location is the cytoplasm. It carries out the reaction Endonucleolytic cleavage at apurinic or apyrimidinic sites to products with a 5'-phosphate.. Its function is as follows. DNA repair enzyme involved in the repair of deaminated bases. Selectively cleaves double-stranded DNA at the second phosphodiester bond 3' to a deoxyinosine leaving behind the intact lesion on the nicked DNA. The chain is Endonuclease V from Bacillus thuringiensis subsp. konkukian (strain 97-27).